A 260-amino-acid chain; its full sequence is tRNA pseudouridine synthase A (260 aa).

The Nucleophile role is filled by D60. Y118 serves as a coordination point for substrate.

It belongs to the tRNA pseudouridine synthase TruA family. Homodimer.

The catalysed reaction is uridine(38/39/40) in tRNA = pseudouridine(38/39/40) in tRNA. Formation of pseudouridine at positions 38, 39 and 40 in the anticodon stem and loop of transfer RNAs. This chain is tRNA pseudouridine synthase A, found in Leuconostoc citreum (strain KM20).